The sequence spans 476 residues: UDP-N-acetylmuramate--L-alanine ligase (476 aa).

Position 115–121 (115–121 (GTHGKTT)) interacts with ATP.

Belongs to the MurCDEF family.

It localises to the cytoplasm. It catalyses the reaction UDP-N-acetyl-alpha-D-muramate + L-alanine + ATP = UDP-N-acetyl-alpha-D-muramoyl-L-alanine + ADP + phosphate + H(+). Its pathway is cell wall biogenesis; peptidoglycan biosynthesis. Functionally, cell wall formation. The sequence is that of UDP-N-acetylmuramate--L-alanine ligase from Paramagnetospirillum magneticum (strain ATCC 700264 / AMB-1) (Magnetospirillum magneticum).